We begin with the raw amino-acid sequence, 82 residues long: Photosystem I iron-sulfur center (82 aa).

4Fe-4S ferredoxin-type domains are found at residues 2-31 and 40-69; these read AHSVKIYDTCIGCTQCVRACPTDVLEMVPW and IAAAPRTEDCVGCKRCETACPTDFLSIRVY. [4Fe-4S] cluster is bound by residues Cys11, Cys14, Cys17, Cys21, Cys49, Cys52, Cys55, and Cys59.

The cyanobacterial PSI reaction center is composed of one copy each of PsaA,B,C,D,E,F,I,J,K,L,M and X, and forms trimeric complexes. [4Fe-4S] cluster is required as a cofactor.

It is found in the cellular thylakoid membrane. It carries out the reaction reduced [plastocyanin] + hnu + oxidized [2Fe-2S]-[ferredoxin] = oxidized [plastocyanin] + reduced [2Fe-2S]-[ferredoxin]. Apoprotein for the two 4Fe-4S centers FA and FB of photosystem I (PSI); essential for photochemical activity. FB is the terminal electron acceptor of PSI, donating electrons to ferredoxin. The C-terminus interacts with PsaA/B/D and helps assemble the protein into the PSI complex. Required for binding of PsaD and PsaE to PSI. PSI is a plastocyanin/cytochrome c6-ferredoxin oxidoreductase, converting photonic excitation into a charge separation, which transfers an electron from the donor P700 chlorophyll pair to the spectroscopically characterized acceptors A0, A1, FX, FA and FB in turn. This Synechococcus sp. (strain JA-2-3B'a(2-13)) (Cyanobacteria bacterium Yellowstone B-Prime) protein is Photosystem I iron-sulfur center.